Reading from the N-terminus, the 158-residue chain is COP9 signalosome complex subunit 9 (158 aa).

The PCI domain maps to 5-119 (LLRNLIEDKT…SVARRATVLE (115 aa)).

Component of a COP9 signalosome-like (CSN) complex.

The protein resides in the cytoplasm. It is found in the nucleus. Component of the COP9 signalosome (CSN) complex that acts as a regulator of the ubiquitin (Ubl) conjugation pathway by mediating the deneddylation of the cullin subunit of SCF-type E3 ubiquitin-protein ligase complexes. The complex is involved in the regulation of the mating pheromone response. The protein is COP9 signalosome complex subunit 9 (CSN9) of Kluyveromyces lactis (strain ATCC 8585 / CBS 2359 / DSM 70799 / NBRC 1267 / NRRL Y-1140 / WM37) (Yeast).